A 508-amino-acid chain; its full sequence is Photosystem II CP47 reaction center protein (508 aa).

A run of 6 helical transmembrane segments spans residues Ser-21–Ser-36, Ile-101–Trp-115, Gly-140–Phe-156, Ile-203–Ser-218, Val-237–Val-252, and Ser-457–Arg-472.

It belongs to the PsbB/PsbC family. PsbB subfamily. As to quaternary structure, PSII is composed of 1 copy each of membrane proteins PsbA, PsbB, PsbC, PsbD, PsbE, PsbF, PsbH, PsbI, PsbJ, PsbK, PsbL, PsbM, PsbT, PsbX, PsbY, PsbZ, Psb30/Ycf12, at least 3 peripheral proteins of the oxygen-evolving complex and a large number of cofactors. It forms dimeric complexes. Binds multiple chlorophylls. PSII binds additional chlorophylls, carotenoids and specific lipids. serves as cofactor.

It localises to the plastid. It is found in the chloroplast thylakoid membrane. One of the components of the core complex of photosystem II (PSII). It binds chlorophyll and helps catalyze the primary light-induced photochemical processes of PSII. PSII is a light-driven water:plastoquinone oxidoreductase, using light energy to abstract electrons from H(2)O, generating O(2) and a proton gradient subsequently used for ATP formation. The chain is Photosystem II CP47 reaction center protein from Nasturtium officinale (Watercress).